Reading from the N-terminus, the 286-residue chain is Putative short-chain type dehydrogenase/reductase Rv0148 (286 aa).

11 to 35 (VTGAGGGLGREYALTLAGEGASVVV) provides a ligand contact to NAD(+). Serine 151 serves as a coordination point for substrate. Tyrosine 164 serves as the catalytic Proton acceptor. An Isoglutamyl lysine isopeptide (Lys-Gln) (interchain with Q-Cter in protein Pup) cross-link involves residue lysine 280.

The protein belongs to the short-chain dehydrogenases/reductases (SDR) family. In terms of processing, pupylated at Lys-280 by the prokaryotic ubiquitin-like protein Pup, which probably leads to its degradation by the proteasome.

The chain is Putative short-chain type dehydrogenase/reductase Rv0148 from Mycobacterium tuberculosis (strain ATCC 25618 / H37Rv).